Here is a 130-residue protein sequence, read N- to C-terminus: Small ribosomal subunit protein eS17 (130 aa).

This sequence belongs to the eukaryotic ribosomal protein eS17 family.

This Theileria parva (East coast fever infection agent) protein is Small ribosomal subunit protein eS17 (RPS17).